The chain runs to 231 residues: Large ribosomal subunit protein uL1 (231 aa).

The protein belongs to the universal ribosomal protein uL1 family. In terms of assembly, part of the 50S ribosomal subunit.

Functionally, binds directly to 23S rRNA. The L1 stalk is quite mobile in the ribosome, and is involved in E site tRNA release. Protein L1 is also a translational repressor protein, it controls the translation of the L11 operon by binding to its mRNA. The protein is Large ribosomal subunit protein uL1 of Acetivibrio thermocellus (strain ATCC 27405 / DSM 1237 / JCM 9322 / NBRC 103400 / NCIMB 10682 / NRRL B-4536 / VPI 7372) (Clostridium thermocellum).